The chain runs to 538 residues: MAEYKKIVLLKGLESMEDYQFRTVKSLLRKELKLTKKLQEDYDRIQLADWMEDKFPKYAGLDKLIKVCEHIKDLKDLAKKLKTEKAKVQKKKQGKCKTAVKKKGQDELSSSESLFINKESYKSVPSSKKKGKAIAKTEGEKKNKLTQDQDHLPETSGTDIKTEEDCLQNSPKPPPTSPSSSSNKKKRKEITKTEGGKKKKLTQEQAQLPEPLGTDIKKDEDCLQTPPKPPPTPPSSSLNKKRKSRREEETGVKKSKAAKEPDQPPCCEEPTARCQSPILHSSSSASSNIPSATNQKPQPQNQNIPRGAVLHSEPLTVMVLTATDPFEYESPEHEVKNMFHATVATVSQYFHVKVFNINLKEKFTKKNFIIISNYFESKGILEINETSSVLKADPDQMIEVPNNIIRNANASPKICDIQKGTSGAVFYGVFTLHKKKVKTQNTSYEIKDGSGSIEVEGSGQWHNINCKEGDKLHLFCFHLKRERGQPKLVCGDHSFVKIKVTKAGKKKEASTVLSSTKNEEENNYPKDGIKVEMPDYHV.

Positions 1–87 (MAEYKKIVLL…AKKLKTEKAK (87 aa)) constitute a Pyrin domain. Residues 120–306 (SYKSVPSSKK…PQPQNQNIPR (187 aa)) form a disordered region. Basic and acidic residues-rich tracts occupy residues 135 to 153 (AKTEGEKKNKLTQDQDHLP) and 245 to 262 (RREEETGVKKSKAAKEPD). Residues 276–305 (SPILHSSSSASSNIPSATNQKPQPQNQNIP) are compositionally biased toward low complexity. Residues 299 to 499 (PQNQNIPRGA…CGDHSFVKIK (201 aa)) enclose the HIN-200 domain.

It belongs to the HIN-200 family. Highest expression observed in spleen and thymus with moderate levels in bone marrow, lung, skin and heart, low levels in muscle, liver and intestine and little or no expression in brain and pancreas.

It is found in the nucleus. Functionally, suppresses cell growth when expressed ectopically. In Mus musculus (Mouse), this protein is Myeloid cell nuclear differentiation antigen-like protein.